The chain runs to 260 residues: DNA repair protein RecO (260 aa).

It belongs to the RecO family.

Its function is as follows. Involved in DNA repair and RecF pathway recombination. The protein is DNA repair protein RecO of Desulfosudis oleivorans (strain DSM 6200 / JCM 39069 / Hxd3) (Desulfococcus oleovorans).